We begin with the raw amino-acid sequence, 352 residues long: S-adenosylmethionine:tRNA ribosyltransferase-isomerase (352 aa).

It belongs to the QueA family. In terms of assembly, monomer.

It localises to the cytoplasm. The enzyme catalyses 7-aminomethyl-7-carbaguanosine(34) in tRNA + S-adenosyl-L-methionine = epoxyqueuosine(34) in tRNA + adenine + L-methionine + 2 H(+). It functions in the pathway tRNA modification; tRNA-queuosine biosynthesis. In terms of biological role, transfers and isomerizes the ribose moiety from AdoMet to the 7-aminomethyl group of 7-deazaguanine (preQ1-tRNA) to give epoxyqueuosine (oQ-tRNA). The chain is S-adenosylmethionine:tRNA ribosyltransferase-isomerase from Paraburkholderia xenovorans (strain LB400).